The chain runs to 337 residues: Probable RuBisCO transcriptional regulator (337 aa).

An HTH lysR-type domain is found at 6–63; the sequence is FTLDQLRILKAIAVEGSFKRAADSLYVSQPAVSLQVQNLERQLDVPLFDRGGRRAQLT. Residues 23–42 constitute a DNA-binding region (H-T-H motif); it reads FKRAADSLYVSQPAVSLQVQ.

The protein belongs to the LysR transcriptional regulatory family.

In terms of biological role, trans-acting transcriptional regulator of RuBisCO genes (rbcL and rbcS) expression. The protein is Probable RuBisCO transcriptional regulator (rbcR) of Nostoc sp. (strain PCC 7120 / SAG 25.82 / UTEX 2576).